Reading from the N-terminus, the 730-residue chain is Meiotically up-regulated gene 70 protein (730 aa).

Residues 1–27 (MTVGTLSVVSSTASDTASHVSDTRKRQ) are disordered. A compositionally biased stretch (low complexity) spans 7–20 (SVVSSTASDTASHV). CBS domains follow at residues 69–127 (ALDP…LNAR), 135–200 (MSTS…RIAR), 263–319 (SSEE…GLDP), and 328–385 (MTPH…PEEE). Transmembrane regions (helical) follow at residues 290 to 310 (AVLVMDNGAVSGVFTAHDVVL) and 358 to 378 (VVDESDAIIGMLSLFHLATAI). The segment at 420-517 (ENYDVNPPLP…ENGSNSFAAS (98 aa)) is disordered. Composition is skewed to polar residues over residues 458–470 (AWQNENLSSNNKP) and 480–515 (YNFSNNPPTAMSEQSFHPSVSQKPMDTPENGSNSFA). The PB1 domain maps to 572-649 (PSQFTIKYRS…ARRRGLPRLE (78 aa)). The chain crosses the membrane as a helical span at residues 706 to 726 (PIYIGIVSSSIVILAVSMWYL).

The protein localises to the cytoplasm. Its subcellular location is the nucleus membrane. Functionally, has a role in meiosis. This is Meiotically up-regulated gene 70 protein (mug70) from Schizosaccharomyces pombe (strain 972 / ATCC 24843) (Fission yeast).